A 56-amino-acid polypeptide reads, in one-letter code: MFRIEYSLVQLLLRNVTIPLLLIIQMHIMSSVKLIQIRIWIQYVTVLQMFSMKTKQ.

Residues 1-31 (MFRIEYSLVQLLLRNVTIPLLLIIQMHIMSS) form the signal peptide.

The protein belongs to the non-disulfide-bridged peptide (NDBP) superfamily. Antimalarial peptide (group 5) family. As to expression, expressed by the venom gland.

It localises to the secreted. This synthetic cationic peptide inhibits the development of Plasmodium berghei ookinetes, kills intraerythrocytic P.falciparum, and is cytotoxic to the Drosophila S2 cell at micromolar concentrations. No antibacterial, antifungal and hemolytic activities have been found at micromolar concentrations. The polypeptide is Meucin-25 (Mesobuthus eupeus (Lesser Asian scorpion)).